The primary structure comprises 427 residues: 3-phosphoshikimate 1-carboxyvinyltransferase (427 aa).

The 3-phosphoshikimate site is built by Lys-22, Ser-23, and Arg-27. Residue Lys-22 participates in phosphoenolpyruvate binding. Phosphoenolpyruvate contacts are provided by Gly-93 and Arg-122. 3-phosphoshikimate is bound by residues Ser-167, Gln-169, Asp-315, and Lys-342. Gln-169 contributes to the phosphoenolpyruvate binding site. Catalysis depends on Asp-315, which acts as the Proton acceptor. 2 residues coordinate phosphoenolpyruvate: Arg-346 and Arg-387.

This sequence belongs to the EPSP synthase family. Monomer.

The protein localises to the cytoplasm. The enzyme catalyses 3-phosphoshikimate + phosphoenolpyruvate = 5-O-(1-carboxyvinyl)-3-phosphoshikimate + phosphate. It functions in the pathway metabolic intermediate biosynthesis; chorismate biosynthesis; chorismate from D-erythrose 4-phosphate and phosphoenolpyruvate: step 6/7. Functionally, catalyzes the transfer of the enolpyruvyl moiety of phosphoenolpyruvate (PEP) to the 5-hydroxyl of shikimate-3-phosphate (S3P) to produce enolpyruvyl shikimate-3-phosphate and inorganic phosphate. The chain is 3-phosphoshikimate 1-carboxyvinyltransferase from Thermus thermophilus (strain ATCC 27634 / DSM 579 / HB8).